Consider the following 128-residue polypeptide: Methylglyoxal synthase (128 aa).

Residues 1–128 (MRIALIAHDR…MQDHPGNRQA (128 aa)) enclose the MGS-like domain. Residues histidine 8, lysine 12, 34–37 (TGTT), and 54–55 (SG) each bind substrate. Aspartate 60 functions as the Proton donor/acceptor in the catalytic mechanism. Residue histidine 87 coordinates substrate.

Belongs to the methylglyoxal synthase family.

It catalyses the reaction dihydroxyacetone phosphate = methylglyoxal + phosphate. In terms of biological role, catalyzes the formation of methylglyoxal from dihydroxyacetone phosphate. The protein is Methylglyoxal synthase of Moorella thermoacetica (strain ATCC 39073 / JCM 9320).